Consider the following 555-residue polypeptide: MHAPVLVLSDSLKRESGSKVHHGNIQASKAVADIIRTTLGPRSMLKMLLDAGGGIVVTNDGNAILRELDVAHPAAKSMIELSRTQDEEVGDGTTSVIVLAGEMLHVAEAFLEKNYHPTVICRAYIKALEDSIAVLDKIAMSIDINDRSQVLGLVKSCIGTKFTSQFGDLIADLAIDATTTVGVDLGQGLREVDIKKYIKVEKVPGGQFEDSEVLKGVMFNKDVVAPGKMKRKIVNPRIILLDCPLEYKKGENQTNAELVREEDWEVLLKLEEEYIENICVQILKFKPDLVITEKGLSDLACHYFSKAGVSAIRRLRKTDNNRIAKACGAVIVNRPDELQESDIGTGAGLFEVKKIGDDFFSFIVDCKEPKACTVLLRGPSKDFINEVERNLQDAMSVARNIIKNPKLVPGGGATELTVSATLKQKSATIEGIEKWPYEAAAIAFEAIPRTLAQNCGVNVIRTMTALQGKHANGENAWTGIDGNTGAIADMKESKIWDSYNVKAQTFKTAIEAACMLLRIDDIVSGIKKKQAPGSGPSKPTIETEGDADNEQILPD.

Residues 527-555 (KKKQAPGSGPSKPTIETEGDADNEQILPD) are disordered.

The protein belongs to the TCP-1 chaperonin family. In terms of assembly, heterooligomeric complex of about 850 to 900 kDa that forms two stacked rings, 12 to 16 nm in diameter. Interacts with CCT8.

Its subcellular location is the cytoplasm. Its function is as follows. Molecular chaperone; assists the folding of proteins upon ATP hydrolysis. Known to play a role, in vitro, in the folding of actin and tubulin. This Arabidopsis thaliana (Mouse-ear cress) protein is T-complex protein 1 subunit gamma.